We begin with the raw amino-acid sequence, 372 residues long: Lipoyl synthase (372 aa).

Cysteine 37, cysteine 42, cysteine 48, cysteine 63, cysteine 67, cysteine 70, and serine 292 together coordinate [4Fe-4S] cluster. The Radical SAM core domain maps to 49–281 (WREGTATVML…ERAALEMGFL (233 aa)). The tract at residues 338-372 (LTAELDPDEPRPPVAPAPASASPARLVPAASLIRR) is disordered. A compositionally biased stretch (low complexity) spans 354 to 372 (APASASPARLVPAASLIRR).

Belongs to the radical SAM superfamily. Lipoyl synthase family. The cofactor is [4Fe-4S] cluster.

The protein localises to the cytoplasm. It carries out the reaction [[Fe-S] cluster scaffold protein carrying a second [4Fe-4S](2+) cluster] + N(6)-octanoyl-L-lysyl-[protein] + 2 oxidized [2Fe-2S]-[ferredoxin] + 2 S-adenosyl-L-methionine + 4 H(+) = [[Fe-S] cluster scaffold protein] + N(6)-[(R)-dihydrolipoyl]-L-lysyl-[protein] + 4 Fe(3+) + 2 hydrogen sulfide + 2 5'-deoxyadenosine + 2 L-methionine + 2 reduced [2Fe-2S]-[ferredoxin]. The protein operates within protein modification; protein lipoylation via endogenous pathway; protein N(6)-(lipoyl)lysine from octanoyl-[acyl-carrier-protein]: step 2/2. Catalyzes the radical-mediated insertion of two sulfur atoms into the C-6 and C-8 positions of the octanoyl moiety bound to the lipoyl domains of lipoate-dependent enzymes, thereby converting the octanoylated domains into lipoylated derivatives. The sequence is that of Lipoyl synthase from Sorangium cellulosum (strain So ce56) (Polyangium cellulosum (strain So ce56)).